Here is an 88-residue protein sequence, read N- to C-terminus: Small ribosomal subunit protein bS20 (88 aa).

The segment at 1–27 is disordered; it reads MANTASAKKMTRKIAKRTAINRSRRSR.

This sequence belongs to the bacterial ribosomal protein bS20 family.

Its function is as follows. Binds directly to 16S ribosomal RNA. This Methylobacterium radiotolerans (strain ATCC 27329 / DSM 1819 / JCM 2831 / NBRC 15690 / NCIMB 10815 / 0-1) protein is Small ribosomal subunit protein bS20.